Consider the following 335-residue polypeptide: Proline racemase (335 aa).

The Proton acceptor role is filled by Cys91. Cys255 acts as the Proton donor in catalysis.

This sequence belongs to the proline racemase family. In terms of assembly, homodimer.

The catalysed reaction is L-proline = D-proline. Functionally, catalyzes the reversible interconversion of L- and D-proline. Plays an important role in the regulation of intra- and extracellular amino acid pools, allowing the bacterium to profit from host precursors and enzymatic pathways. Strong B-cell mitogen. This is Proline racemase from Clostridioides difficile (strain 630) (Peptoclostridium difficile).